The following is a 788-amino-acid chain: LPS-assembly protein LptD (788 aa).

Residues 1–23 (MSLTSRSLLATMISLALYGPAMA) form the signal peptide.

The protein belongs to the LptD family. In terms of assembly, component of the lipopolysaccharide transport and assembly complex. Interacts with LptE and LptA.

It is found in the cell outer membrane. Its function is as follows. Together with LptE, is involved in the assembly of lipopolysaccharide (LPS) at the surface of the outer membrane. The polypeptide is LPS-assembly protein LptD (Photobacterium profundum (strain SS9)).